Consider the following 215-residue polypeptide: Probable phosphoglycerate mutase GpmB (215 aa).

Substrate-binding positions include 8 to 15 (RHGETQWN), 21 to 22 (QG), arginine 58, 82 to 85 (ELDM), 104 to 105 (RR), and 151 to 152 (GI). The active-site Tele-phosphohistidine intermediate is the histidine 9. Catalysis depends on glutamate 82, which acts as the Proton donor/acceptor.

Belongs to the phosphoglycerate mutase family. GpmB subfamily.

The enzyme catalyses (2R)-2-phosphoglycerate = (2R)-3-phosphoglycerate. It participates in carbohydrate degradation; glycolysis; pyruvate from D-glyceraldehyde 3-phosphate: step 3/5. This is Probable phosphoglycerate mutase GpmB from Enterobacter sp. (strain 638).